The following is a 479-amino-acid chain: Deoxyribodipyrimidine photo-lyase (479 aa).

The region spanning 6-132 is the Photolyase/cryptochrome alpha/beta domain; sequence APVIVWFRKD…TVRSFSGQLL (127 aa). An FAD-binding site is contributed by Y226. R230 contributes to the DNA binding site. FAD is bound by residues 238 to 242 and 277 to 284; these read TSLLS and EIVWREFC. Interaction with DNA stretches follow at residues 277–284 and 343–344; these read EIVWREFC and NR. 374–376 is an FAD binding site; sequence DAD. DNA is bound at residue Q406.

This sequence belongs to the DNA photolyase class-3 family. Requires FAD as cofactor. It depends on (6R)-5,10-methylene-5,6,7,8-tetrahydrofolate as a cofactor.

It catalyses the reaction cyclobutadipyrimidine (in DNA) = 2 pyrimidine residues (in DNA).. Functionally, photolyase involved in the repair of UV radiation-induced DNA damage. By using blue-light energy, catalyzes the photoreactivation of cyclobutane pyrimidine dimers (CPDs), which are formed between adjacent bases on the same DNA strand upon exposure to ultraviolet radiation. Can repair CPD lesions in ssDNA as well as in dsDNA. This is Deoxyribodipyrimidine photo-lyase from Agrobacterium fabrum (strain C58 / ATCC 33970) (Agrobacterium tumefaciens (strain C58)).